The sequence spans 200 residues: Phosphatidylethanolamine N-methyltransferase B (200 aa).

Residues 1 to 8 lie on the Lumenal side of the membrane; sequence MEKGLSSD. The helical intramembrane region spans 9–29; sequence LIIAFVAIVLHVVNYNVTAQF. The Lumenal portion of the chain corresponds to 30–39; sequence EYKTRYFTKL. The helical transmembrane segment at 40–58 threads the bilayer; that stretch reads IGRNAIYYYAVFLIISALI. Residues 59 to 86 lie on the Cytoplasmic side of the membrane; it reads RDHFINVAVLSDKDSIILFPTEIANMIG. The chain crosses the membrane as a helical span at residues 87-107; the sequence is DSCFIFGILLNIWTLKALGIK. 91 to 93 provides a ligand contact to S-adenosyl-L-methionine; sequence IFG. Residues 108-150 are Lumenal-facing; the sequence is GMYNGDSFGHIMDSPVTGGPYQFFSDPQYVGTTIAALGVAIRN. The helical transmembrane segment at 151–171 threads the bilayer; it reads QSIYGFLCTILVGVVFYISAT. Residues 172-200 lie on the Cytoplasmic side of the membrane; sequence FVETPHLKNIYSNRSYSKINFKNLKSLKN. S-adenosyl-L-methionine is bound at residue 174 to 175; that stretch reads ET.

The protein belongs to the class VI-like SAM-binding methyltransferase superfamily. PEMT/PEM2 methyltransferase family.

The protein localises to the endoplasmic reticulum membrane. It localises to the mitochondrion membrane. The catalysed reaction is a 1,2-diacyl-sn-glycero-3-phospho-N-methylethanolamine + S-adenosyl-L-methionine = a 1,2-diacyl-sn-glycero-3-phospho-N,N-dimethylethanolamine + S-adenosyl-L-homocysteine + H(+). The enzyme catalyses a 1,2-diacyl-sn-glycero-3-phospho-N,N-dimethylethanolamine + S-adenosyl-L-methionine = a 1,2-diacyl-sn-glycero-3-phosphocholine + S-adenosyl-L-homocysteine + H(+). It carries out the reaction a 1,2-diacyl-sn-glycero-3-phosphoethanolamine + S-adenosyl-L-methionine = a 1,2-diacyl-sn-glycero-3-phospho-N-methylethanolamine + S-adenosyl-L-homocysteine + H(+). The protein operates within phospholipid metabolism; phosphatidylcholine biosynthesis. In terms of biological role, catalyzes the three sequential steps of the methylation pathway of phosphatidylcholine biosynthesis, the SAM-dependent methylation of phosphatidylethanolamine (PE) to phosphatidylmonomethylethanolamine (PMME), PMME to phosphatidyldimethylethanolamine (PDME), and PDME to phosphatidylcholine (PC). The protein is Phosphatidylethanolamine N-methyltransferase B (pemtB) of Dictyostelium discoideum (Social amoeba).